Consider the following 342-residue polypeptide: MNTADFDFHLPEELIAQTPLEKRDASKLLIVNRETGEMQDKHFHSIIDMLEPGDALVMNDTRVLPARLYGQKVETGGHVELLLLKNTSGDEWEVLAKPAKRLKVGTRISFGDGRLSAVVTEELTHGGRIVRFEYQGIFLEVLESLGEMPLPPYIHEKLDDRERYQTVYAKESGSAAAPTAGLHFTKELLAEIQAKGVHLVYLTLHVGLGTFRPVSVDNLDEHEMHSEFYQLSEEAAATLRSVKKNGGRVIAVGTTSIRTLETIGSKFDGQIQADSGWTNIFIKPGYEWKVVDAFSTNFHLPKSTLVMLVSAFAGRELVLDAYHHAIQEHYRFFSFGDAMFIY.

This sequence belongs to the QueA family. In terms of assembly, monomer.

It is found in the cytoplasm. The enzyme catalyses 7-aminomethyl-7-carbaguanosine(34) in tRNA + S-adenosyl-L-methionine = epoxyqueuosine(34) in tRNA + adenine + L-methionine + 2 H(+). The protein operates within tRNA modification; tRNA-queuosine biosynthesis. Transfers and isomerizes the ribose moiety from AdoMet to the 7-aminomethyl group of 7-deazaguanine (preQ1-tRNA) to give epoxyqueuosine (oQ-tRNA). This Streptococcus pneumoniae (strain Hungary19A-6) protein is S-adenosylmethionine:tRNA ribosyltransferase-isomerase.